The chain runs to 284 residues: MEMO1 family protein Mevan_0697 (284 aa).

It belongs to the MEMO1 family.

The protein is MEMO1 family protein Mevan_0697 of Methanococcus vannielii (strain ATCC 35089 / DSM 1224 / JCM 13029 / OCM 148 / SB).